A 50-amino-acid polypeptide reads, in one-letter code: Protein hunchback (50 aa).

3 consecutive C2H2-type zinc fingers follow at residues 1–5 (HIRNH), 11–33 (FKCN…LKSH), and 39–50 (YRCADCAYATKY).

Belongs to the hunchback C2H2-type zinc-finger protein family.

The protein resides in the nucleus. In terms of biological role, gap class segmentation protein that controls development of head structures. The polypeptide is Protein hunchback (hb) (Schultesia lampyridiformis (Firefly mimic roach)).